Here is a 408-residue protein sequence, read N- to C-terminus: Arylacetamide deacetylase-like 3 (408 aa).

3 consecutive transmembrane segments (helical) span residues 2 to 22 (VVLA…GSLL), 46 to 66 (ILSC…KLGL), and 109 to 129 (SSIP…IGSL). Positions 120–122 (HGG) match the Involved in the stabilization of the negatively charged intermediate by the formation of the oxyanion hole motif. Serine 194 is an active-site residue. Residue asparagine 321 is glycosylated (N-linked (GlcNAc...) asparagine). Catalysis depends on residues aspartate 348 and histidine 378.

It belongs to the 'GDXG' lipolytic enzyme family.

It localises to the membrane. The protein is Arylacetamide deacetylase-like 3 (Aadacl3) of Mus musculus (Mouse).